A 643-amino-acid chain; its full sequence is Phosphomethylpyrimidine synthase (643 aa).

Substrate is bound by residues Asn-248, Met-277, Tyr-306, His-342, 362 to 364 (SRG), 403 to 406 (DGLR), and Glu-442. His-446 provides a ligand contact to Zn(2+). Tyr-469 provides a ligand contact to substrate. His-510 lines the Zn(2+) pocket. [4Fe-4S] cluster contacts are provided by Cys-590, Cys-593, and Cys-598.

The protein belongs to the ThiC family. As to quaternary structure, homodimer. Requires [4Fe-4S] cluster as cofactor.

It catalyses the reaction 5-amino-1-(5-phospho-beta-D-ribosyl)imidazole + S-adenosyl-L-methionine = 4-amino-2-methyl-5-(phosphooxymethyl)pyrimidine + CO + 5'-deoxyadenosine + formate + L-methionine + 3 H(+). It participates in cofactor biosynthesis; thiamine diphosphate biosynthesis. Its function is as follows. Catalyzes the synthesis of the hydroxymethylpyrimidine phosphate (HMP-P) moiety of thiamine from aminoimidazole ribotide (AIR) in a radical S-adenosyl-L-methionine (SAM)-dependent reaction. The protein is Phosphomethylpyrimidine synthase of Paraburkholderia xenovorans (strain LB400).